Here is a 189-residue protein sequence, read N- to C-terminus: Glycerol-3-phosphate acyltransferase (189 aa).

4 consecutive transmembrane segments (helical) span residues Met1 to Leu21, Leu77 to Phe97, Met111 to Phe131, and Leu151 to Val171.

Belongs to the PlsY family. As to quaternary structure, probably interacts with PlsX.

It localises to the cell inner membrane. The catalysed reaction is an acyl phosphate + sn-glycerol 3-phosphate = a 1-acyl-sn-glycero-3-phosphate + phosphate. It functions in the pathway lipid metabolism; phospholipid metabolism. In terms of biological role, catalyzes the transfer of an acyl group from acyl-phosphate (acyl-PO(4)) to glycerol-3-phosphate (G3P) to form lysophosphatidic acid (LPA). This enzyme utilizes acyl-phosphate as fatty acyl donor, but not acyl-CoA or acyl-ACP. This chain is Glycerol-3-phosphate acyltransferase, found in Pseudomonas putida (strain W619).